Here is a 541-residue protein sequence, read N- to C-terminus: Putative asparagine synthetase [glutamine-hydrolyzing] 1 (541 aa).

Cys2 acts as the For GATase activity in catalysis. Residues Cys2–Asp213 form the Glutamine amidotransferase type-2 domain. L-glutamine-binding positions include Arg68–Val72, Asn92–Glu94, and Asp116. Residues Val289 and Ser363–Gly364 contribute to the ATP site.

It belongs to the asparagine synthetase family.

The catalysed reaction is L-aspartate + L-glutamine + ATP + H2O = L-asparagine + L-glutamate + AMP + diphosphate + H(+). It functions in the pathway amino-acid biosynthesis; L-asparagine biosynthesis; L-asparagine from L-aspartate (L-Gln route): step 1/1. This chain is Putative asparagine synthetase [glutamine-hydrolyzing] 1, found in Methanocaldococcus jannaschii (strain ATCC 43067 / DSM 2661 / JAL-1 / JCM 10045 / NBRC 100440) (Methanococcus jannaschii).